Consider the following 618-residue polypeptide: Crinkler effector protein 16 (618 aa).

Positions 1–19 (MVVVSLQCAIVGQAGSSFD) are cleaved as a signal peptide. An LQLFLAK domain region spans residues 18 to 57 (FDVEIDDGAKVSKLKDAIKAKKPNDFKVVDADKLHLFLAK). The interval 58–139 (QPVEDESGKE…NMELPSSEQI (82 aa)) is DWL domain. The HVLVXXP motif signature appears at 140–146 (HVLVVVP). Asn-534 carries N-linked (GlcNAc...) asparagine glycosylation.

It belongs to the Crinkler effector family.

Its subcellular location is the secreted. It localises to the host nucleus. In terms of biological role, secreted effector that elicits necrosis in host plants, a characteristic of plant innate immunity. The sequence is that of Crinkler effector protein 16 from Phytophthora infestans (Potato late blight agent).